The following is a 448-amino-acid chain: Phosphoglucosamine mutase (448 aa).

The active-site Phosphoserine intermediate is Ser-102. Residues Ser-102, Asp-243, Asp-245, and Asp-247 each coordinate Mg(2+). Position 102 is a phosphoserine (Ser-102).

Belongs to the phosphohexose mutase family. It depends on Mg(2+) as a cofactor. In terms of processing, activated by phosphorylation.

It carries out the reaction alpha-D-glucosamine 1-phosphate = D-glucosamine 6-phosphate. In terms of biological role, catalyzes the conversion of glucosamine-6-phosphate to glucosamine-1-phosphate. The sequence is that of Phosphoglucosamine mutase from Parvibaculum lavamentivorans (strain DS-1 / DSM 13023 / NCIMB 13966).